The primary structure comprises 317 residues: Coproporphyrinogen-III oxidase, aerobic 1 (317 aa).

Positions 38–47 (VLRDGAIFEQ) are important for dimerization. Ser-82 serves as a coordination point for substrate. His-96 acts as the Proton donor in catalysis. Substrate-binding positions include 98-100 (NYR) and 269-274 (NGRTES). The segment at 251-286 (YVEFNLVYDRGTIFGLQTNGRTESILMSLPPLVRWE) is important for dimerization.

It belongs to the aerobic coproporphyrinogen-III oxidase family. In terms of assembly, homodimer.

The protein resides in the cytoplasm. It carries out the reaction coproporphyrinogen III + O2 + 2 H(+) = protoporphyrinogen IX + 2 CO2 + 2 H2O. It functions in the pathway porphyrin-containing compound metabolism; protoporphyrin-IX biosynthesis; protoporphyrinogen-IX from coproporphyrinogen-III (O2 route): step 1/1. Its function is as follows. Key enzyme in heme biosynthesis. Catalyzes the oxidative decarboxylation of propionic acid side chains of rings A and B of coproporphyrinogen III. In Nostoc sp. (strain PCC 7120 / SAG 25.82 / UTEX 2576), this protein is Coproporphyrinogen-III oxidase, aerobic 1.